We begin with the raw amino-acid sequence, 85 residues long: Large ribosomal subunit protein bL27 (85 aa).

The disordered stretch occupies residues 1 to 20 (MATKKAGGSTKNGRDSNPKM).

Belongs to the bacterial ribosomal protein bL27 family.

The protein is Large ribosomal subunit protein bL27 of Acinetobacter baumannii (strain AB307-0294).